Here is a 418-residue protein sequence, read N- to C-terminus: Delta(14)-sterol reductase TM7SF2 (418 aa).

A run of 6 helical transmembrane segments spans residues 13–35 (FGGP…HLLL), 62–81 (ALLL…LLPA), 102–124 (GFQA…LPLS), 129–148 (MLLP…SLLL), 255–277 (FGFM…QAQF), and 287–304 (WPLA…YYIF). Residues K311, R315, L338, W343, and 350–351 (NY) each bind NADP(+). Residues 355 to 377 (LIMALAWSLPCGVFHLLPYFYFL) form a helical membrane-spanning segment. NADP(+)-binding positions include D390, 394 to 398 (CRQKY), and Y405.

The protein belongs to the ERG4/ERG24 family. Highly expressed in liver and brain.

Its subcellular location is the microsome membrane. The protein resides in the endoplasmic reticulum membrane. It carries out the reaction 4,4-dimethyl-5alpha-cholesta-8,24-dien-3beta-ol + NADP(+) = 4,4-dimethyl-5alpha-cholesta-8,14,24-trien-3beta-ol + NADPH + H(+). The enzyme catalyses 5alpha-cholest-8,14-dien-3beta-ol + NADPH + H(+) = 5alpha-cholest-8-en-3beta-ol + NADP(+). It catalyses the reaction 4,4-dimethyl-8,14-cholestadien-3beta-ol + NADPH + H(+) = 4,4-dimethyl-5alpha-cholest-8-en-3beta-ol + NADP(+). It participates in steroid biosynthesis; cholesterol biosynthesis. Functionally, catalyzes the reduction of the C14-unsaturated bond of lanosterol, as part of the metabolic pathway leading to cholesterol biosynthesis. This Bos taurus (Bovine) protein is Delta(14)-sterol reductase TM7SF2 (TM7SF2).